The following is a 222-amino-acid chain: 6,7-dimethyl-8-ribityllumazine synthase, chloroplastic (222 aa).

The transit peptide at 1-66 (MASFAASQTC…NRASFVVTNA (66 aa)) directs the protein to the chloroplast. Residues Phe89, 122-124 (AYE), and 146-148 (AVV) each bind 5-amino-6-(D-ribitylamino)uracil. Position 151–152 (151–152 (DT)) interacts with (2S)-2-hydroxy-3-oxobutyl phosphate. His154 functions as the Proton donor in the catalytic mechanism. Phe179 is a 5-amino-6-(D-ribitylamino)uracil binding site. Arg193 is a (2S)-2-hydroxy-3-oxobutyl phosphate binding site.

The protein belongs to the DMRL synthase family. As to quaternary structure, oligomer forming an icosahedral capsid.

It is found in the plastid. Its subcellular location is the chloroplast. The enzyme catalyses (2S)-2-hydroxy-3-oxobutyl phosphate + 5-amino-6-(D-ribitylamino)uracil = 6,7-dimethyl-8-(1-D-ribityl)lumazine + phosphate + 2 H2O + H(+). Its pathway is cofactor biosynthesis; riboflavin biosynthesis; riboflavin from 2-hydroxy-3-oxobutyl phosphate and 5-amino-6-(D-ribitylamino)uracil: step 1/2. Catalyzes the formation of 6,7-dimethyl-8-ribityllumazine by condensation of 5-amino-6-(D-ribitylamino)uracil with 3,4-dihydroxy-2-butanone 4-phosphate. This is the penultimate step in the biosynthesis of riboflavin. This is 6,7-dimethyl-8-ribityllumazine synthase, chloroplastic from Spinacia oleracea (Spinach).